The primary structure comprises 110 residues: Small ribosomal subunit protein eS25 (110 aa).

Residues 1–37 form a disordered region; it reads MGGASKKPISTMEKRLKKEAEKQQKAEEKKKGPSKTG. Residues 12-37 are compositionally biased toward basic and acidic residues; the sequence is MEKRLKKEAEKQQKAEEKKKGPSKTG.

It belongs to the eukaryotic ribosomal protein eS25 family.

This chain is Small ribosomal subunit protein eS25 (rps25e), found in Saccharolobus solfataricus (strain ATCC 35092 / DSM 1617 / JCM 11322 / P2) (Sulfolobus solfataricus).